Consider the following 380-residue polypeptide: Cytochrome b (380 aa).

4 helical membrane passes run 34 to 54 (FGSLLGICLLTQIMTGLLLAT), 78 to 99 (WLIRNLHANGASFFFICIYLHI), 114 to 134 (WNTGIILLLTLMATAFVGYVL), and 179 to 199 (FFALHFLLPFLIAGLTLIHLT). Residues H84 and H98 each contribute to the heme b site. Residues H183 and H197 each contribute to the heme b site. H202 serves as a coordination point for a ubiquinone. Helical transmembrane passes span 227 to 247 (LKDILGFMLMLLPLTTLALFS), 289 to 309 (LGGVLALAASVLILFLIPFLH), 321 to 341 (ISQLLFWTLVANLLILTWIGS), and 348 to 368 (FIIIGQLASLTYFLILLALFP).

This sequence belongs to the cytochrome b family. As to quaternary structure, the cytochrome bc1 complex contains 11 subunits: 3 respiratory subunits (MT-CYB, CYC1 and UQCRFS1), 2 core proteins (UQCRC1 and UQCRC2) and 6 low-molecular weight proteins (UQCRH/QCR6, UQCRB/QCR7, UQCRQ/QCR8, UQCR10/QCR9, UQCR11/QCR10 and a cleavage product of UQCRFS1). This cytochrome bc1 complex then forms a dimer. It depends on heme b as a cofactor.

Its subcellular location is the mitochondrion inner membrane. In terms of biological role, component of the ubiquinol-cytochrome c reductase complex (complex III or cytochrome b-c1 complex) that is part of the mitochondrial respiratory chain. The b-c1 complex mediates electron transfer from ubiquinol to cytochrome c. Contributes to the generation of a proton gradient across the mitochondrial membrane that is then used for ATP synthesis. The chain is Cytochrome b (MT-CYB) from Buteo buteo (Eurasian buzzard).